A 297-amino-acid polypeptide reads, in one-letter code: Probable porphobilinogen deaminase (297 aa).

Position 233 is an S-(dipyrrolylmethanemethyl)cysteine (Cys-233).

The protein belongs to the HMBS family. The cofactor is dipyrromethane.

The enzyme catalyses 4 porphobilinogen + H2O = hydroxymethylbilane + 4 NH4(+). The protein operates within porphyrin-containing compound metabolism; protoporphyrin-IX biosynthesis; coproporphyrinogen-III from 5-aminolevulinate: step 2/4. Its function is as follows. Tetrapolymerization of the monopyrrole PBG into the hydroxymethylbilane pre-uroporphyrinogen in several discrete steps. The polypeptide is Probable porphobilinogen deaminase (Thermoplasma volcanium (strain ATCC 51530 / DSM 4299 / JCM 9571 / NBRC 15438 / GSS1)).